The following is a 195-amino-acid chain: Small ribosomal subunit protein uS7 (195 aa).

This sequence belongs to the universal ribosomal protein uS7 family. In terms of assembly, part of the 30S ribosomal subunit.

Functionally, one of the primary rRNA binding proteins, it binds directly to 16S rRNA where it nucleates assembly of the head domain of the 30S subunit. Is located at the subunit interface close to the decoding center. The polypeptide is Small ribosomal subunit protein uS7 (Sulfolobus acidocaldarius (strain ATCC 33909 / DSM 639 / JCM 8929 / NBRC 15157 / NCIMB 11770)).